Reading from the N-terminus, the 456-residue chain is NADH oxidase (456 aa).

An FAD-binding site is contributed by N10. The active-site Proton acceptor is the H11. Positions 12, 34, 35, 44, 81, 110, 113, 143, and 170 each coordinate FAD. C44 acts as the Redox-active in catalysis. Position 44 is a cysteine sulfinic acid (-SO2H) (C44). NAD(+) is bound by residues I171, D190, Y199, and G254. Residue D292 participates in FAD binding. Position 308 (A308) interacts with NAD(+). FAD-binding residues include L309, A310, and S311. G339 is a binding site for NAD(+). FAD is bound at residue F436.

FAD serves as cofactor.

It carries out the reaction 2 NADH + O2 + 2 H(+) = 2 NAD(+) + 2 H2O. Its function is as follows. Catalyzes the four-electron reduction of molecular oxygen to water. The chain is NADH oxidase from Streptococcus pyogenes serotype M6 (strain ATCC BAA-946 / MGAS10394).